A 431-amino-acid chain; its full sequence is Helix-loop-helix protein 11 (431 aa).

Residues 88–109 (LANRSLSQPAPLSPTSLDPDRR) are disordered. The segment covering 91-103 (RSLSQPAPLSPTS) has biased composition (polar residues). One can recognise a bHLH domain in the interval 112-163 (MRRQIANCNERRRMQSINAGFLALRALLPRKEGEKLSKAAILQQTADMVHQL). Composition is skewed to polar residues over residues 226-241 (TTTSSQASSPVTPRSN) and 248-257 (LPSSYASSAL). The interval 226–311 (TTTSSQASSP…PPPTLPSLET (86 aa)) is disordered. The segment covering 274–291 (TTSTPLSLLTLNGSPTSS) has biased composition (low complexity).

As to expression, expressed in the pharynx, nerve cords, the H-shaped excretory cell, vulva muscles, and the anal depressor (at protein level). Expressed in the intestine (at protein level). In males, it is also expressed in the spicules and hyp7 cells of the hypodermis (at protein level).

The protein resides in the nucleus. Transcriptional regulator. Component of a feedback loop involving atfs-1, atgl-1 and hlh-11. Binds to the promoter of the atgl-1 lipase to negatively regulate the expression of atgl-1, and thereby promoting fat oxidation in response to mitochondrial stress and mitochondrial respiration in the intestine. In addition, functions with atfs-1 to maintain lifespan. May have a role in fertility and in positively regulating body size. The sequence is that of Helix-loop-helix protein 11 from Caenorhabditis elegans.